An 81-amino-acid chain; its full sequence is Delta-conotoxin PVIA (81 aa).

A signal peptide spans 1–22; the sequence is MKLTCVMIVAVLFLTAWTFVTA. Positions 23–49 are excised as a propeptide; the sequence is DDSKNGLENHFWKARDEMKNREASKLD. 3 cysteine pairs are disulfide-bonded: Cys54/Cys69, Cys61/Cys73, and Cys68/Cys78. 4-hydroxyproline is present on residues Pro57 and Pro65. Gly80 is subject to Glycine amide; in form delta-conotoxin PVIA.

The difference between delta-conotoxin PVIA and [deamido]-delta-conotoxin PVIA lies in the state of amidation of Gly-80. In terms of tissue distribution, expressed by the venom duct.

Its subcellular location is the secreted. Its function is as follows. Delta-conotoxins bind to site 6 of voltage-gated sodium channels (Nav) and inhibit the inactivation process. This toxin shows weak effects on rNav1.2/SCN2A (EC(50)=2.9 uM), rNav1.4/SCN4A (EC(50)=5.2 uM), hNav1.7/SCN9A (EC(50)=1.9 uM) and rNav1.7/SCN9A (EC(50)=6.4 uM). In vivo, this toxin shows different effects. In mice, injection of this toxin causes hyperactivity, rapid running, limb extension, and death. In fish, the peptide elicites spurts of rapid swimming, with twisted motions, quivering fins and the lockjaw extended mouth syndrome. Rigid paralysis and death are observed at higher doses. In mollusks, this peptide is inactive. Injection of this peptide together with the kappa-conotoxin PVIIA causes the sudden tetanus of prey (STOP) syndrome, which is a single, lethal 'fin-pop' in envenomed fish. This Conus purpurascens (Purple cone) protein is Delta-conotoxin PVIA.